We begin with the raw amino-acid sequence, 255 residues long: 1-(5-phosphoribosyl)-5-[(5-phosphoribosylamino)methylideneamino] imidazole-4-carboxamide isomerase (255 aa).

D8 functions as the Proton acceptor in the catalytic mechanism. D129 acts as the Proton donor in catalysis.

Belongs to the HisA/HisF family.

The protein localises to the cytoplasm. It catalyses the reaction 1-(5-phospho-beta-D-ribosyl)-5-[(5-phospho-beta-D-ribosylamino)methylideneamino]imidazole-4-carboxamide = 5-[(5-phospho-1-deoxy-D-ribulos-1-ylimino)methylamino]-1-(5-phospho-beta-D-ribosyl)imidazole-4-carboxamide. It participates in amino-acid biosynthesis; L-histidine biosynthesis; L-histidine from 5-phospho-alpha-D-ribose 1-diphosphate: step 4/9. This is 1-(5-phosphoribosyl)-5-[(5-phosphoribosylamino)methylideneamino] imidazole-4-carboxamide isomerase from Prochlorococcus marinus (strain MIT 9313).